We begin with the raw amino-acid sequence, 80 residues long: MTESIPKKPLKKGSLVFIDKSIYDGSVEALASDQDLPSYIFEGPGEILSIKEEYAQVRWRRPVPDVWFKLDQIKEYIVSE.

This sequence belongs to the complex I NdhO subunit family. NDH-1 can be composed of about 15 different subunits; different subcomplexes with different compositions have been identified which probably have different functions.

Its subcellular location is the cellular thylakoid membrane. It carries out the reaction a plastoquinone + NADH + (n+1) H(+)(in) = a plastoquinol + NAD(+) + n H(+)(out). It catalyses the reaction a plastoquinone + NADPH + (n+1) H(+)(in) = a plastoquinol + NADP(+) + n H(+)(out). NDH-1 shuttles electrons from an unknown electron donor, via FMN and iron-sulfur (Fe-S) centers, to quinones in the respiratory and/or the photosynthetic chain. The immediate electron acceptor for the enzyme in this species is believed to be plastoquinone. Couples the redox reaction to proton translocation, and thus conserves the redox energy in a proton gradient. Cyanobacterial NDH-1 also plays a role in inorganic carbon-concentration. The polypeptide is NAD(P)H-quinone oxidoreductase subunit O (Prochlorococcus marinus subsp. pastoris (strain CCMP1986 / NIES-2087 / MED4)).